Consider the following 603-residue polypeptide: uncharacterized protein (603 aa).

Positions 4 to 79 (YRIRVTTVDQ…VTFHLVIAVF (76 aa)) constitute a Ubiquitin-like domain. Disordered stretches follow at residues 85 to 121 (TLPS…PEEL), 159 to 178 (SLPT…NSVS), and 206 to 348 (AQES…NQPF). Polar residues-rich tracts occupy residues 94–117 (VPQS…TSLN) and 162–178 (THEQ…NSVS). The segment covering 219-231 (SSSSAPLASDQSP) has biased composition (low complexity). Positions 246–264 (LGSNSGLNPRSPNSFSSPL) are enriched in polar residues. Residues 280–289 (SLSPLSNSSS) are compositionally biased toward low complexity. Over residues 290-314 (INQVHQNETHGSTISVPNPNLSQMG) the composition is skewed to polar residues. Residues 315 to 329 (PSHSSSVPSNLSPNP) show a composition bias toward low complexity. The segment covering 330-348 (AQNENPSTTSIPSINNQPF) has biased composition (polar residues). Residues 496–516 (ILLTSIMSVVFLLQTGALAPF) form a helical membrane-spanning segment. The segment at 544 to 578 (TAQRVVEIPNETQTEDEQDGTNTPDNRADAEEREL) is disordered. The residue at position 566 (Thr-566) is a Phosphothreonine. The span at 569–578 (NRADAEEREL) shows a compositional bias: basic and acidic residues.

It localises to the endoplasmic reticulum membrane. This is an uncharacterized protein from Schizosaccharomyces pombe (strain 972 / ATCC 24843) (Fission yeast).